The chain runs to 163 residues: Lipoprotein signal peptidase (163 aa).

4 helical membrane passes run 9 to 29 (YLAIAIIVLLLDQLSKWSALS), 39 to 59 (VLPFMNWLLLFNPGTAFSFLA), 67 to 87 (WFFTVLGLAASIYIIWMLYKS), and 92 to 112 (LLCIALSLILGGALGNVLDRV). Residues aspartate 119 and aspartate 137 contribute to the active site. A helical transmembrane segment spans residues 130 to 150 (WPAFNIADSAICVGAALIIWG).

The protein belongs to the peptidase A8 family.

Its subcellular location is the cell inner membrane. It catalyses the reaction Release of signal peptides from bacterial membrane prolipoproteins. Hydrolyzes -Xaa-Yaa-Zaa-|-(S,diacylglyceryl)Cys-, in which Xaa is hydrophobic (preferably Leu), and Yaa (Ala or Ser) and Zaa (Gly or Ala) have small, neutral side chains.. It participates in protein modification; lipoprotein biosynthesis (signal peptide cleavage). Its function is as follows. This protein specifically catalyzes the removal of signal peptides from prolipoproteins. The protein is Lipoprotein signal peptidase of Polynucleobacter necessarius subsp. necessarius (strain STIR1).